We begin with the raw amino-acid sequence, 251 residues long: Cell division protein ZapD (251 aa).

The protein belongs to the ZapD family. In terms of assembly, interacts with FtsZ.

The protein localises to the cytoplasm. Functionally, cell division factor that enhances FtsZ-ring assembly. Directly interacts with FtsZ and promotes bundling of FtsZ protofilaments, with a reduction in FtsZ GTPase activity. In Paraburkholderia phymatum (strain DSM 17167 / CIP 108236 / LMG 21445 / STM815) (Burkholderia phymatum), this protein is Cell division protein ZapD.